Here is a 250-residue protein sequence, read N- to C-terminus: Peptidyl-tRNA hydrolase (250 aa).

Tyrosine 14 provides a ligand contact to tRNA. Catalysis depends on histidine 19, which acts as the Proton acceptor. TRNA-binding residues include phenylalanine 64, asparagine 66, and asparagine 112. The interval 192–250 (MGDGNQRPGGVKTDPAQLEKAPPKAQSHIRQARQNQKKPNIPESGPMAEMLKKLLGKKD) is disordered. Residues 219 to 229 (HIRQARQNQKK) show a composition bias toward polar residues. The segment covering 241 to 250 (MLKKLLGKKD) has biased composition (basic and acidic residues).

This sequence belongs to the PTH family. As to quaternary structure, monomer.

The protein resides in the cytoplasm. The catalysed reaction is an N-acyl-L-alpha-aminoacyl-tRNA + H2O = an N-acyl-L-amino acid + a tRNA + H(+). Hydrolyzes ribosome-free peptidyl-tRNAs (with 1 or more amino acids incorporated), which drop off the ribosome during protein synthesis, or as a result of ribosome stalling. Its function is as follows. Catalyzes the release of premature peptidyl moieties from peptidyl-tRNA molecules trapped in stalled 50S ribosomal subunits, and thus maintains levels of free tRNAs and 50S ribosomes. The polypeptide is Peptidyl-tRNA hydrolase (Brucella canis (strain ATCC 23365 / NCTC 10854 / RM-666)).